Here is a 330-residue protein sequence, read N- to C-terminus: Aspartate--ammonia ligase (330 aa).

The protein belongs to the class-II aminoacyl-tRNA synthetase family. AsnA subfamily.

The protein resides in the cytoplasm. It carries out the reaction L-aspartate + NH4(+) + ATP = L-asparagine + AMP + diphosphate + H(+). Its pathway is amino-acid biosynthesis; L-asparagine biosynthesis; L-asparagine from L-aspartate (ammonia route): step 1/1. The sequence is that of Aspartate--ammonia ligase from Actinobacillus succinogenes (strain ATCC 55618 / DSM 22257 / CCUG 43843 / 130Z).